A 328-amino-acid chain; its full sequence is Malate dehydrogenase (328 aa).

Residue 11–17 coordinates NAD(+); it reads GAAGQIG. Positions 94 and 100 each coordinate substrate. Residues asparagine 107, glutamine 114, and 131-133 each bind NAD(+); that span reads VGN. The substrate site is built by asparagine 133 and arginine 164. Catalysis depends on histidine 189, which acts as the Proton acceptor.

The protein belongs to the LDH/MDH superfamily. MDH type 2 family.

It carries out the reaction (S)-malate + NAD(+) = oxaloacetate + NADH + H(+). Catalyzes the reversible oxidation of malate to oxaloacetate. The chain is Malate dehydrogenase from Xanthomonas campestris pv. campestris (strain 8004).